A 415-amino-acid chain; its full sequence is Squalene synthase 10 (415 aa).

A run of 2 helical transmembrane segments spans residues 281 to 301 (AIFR…ALCF) and 392 to 412 (LIVI…SNLP).

The protein belongs to the phytoene/squalene synthase family. Mg(2+) serves as cofactor. The cofactor is Mn(2+).

It is found in the endoplasmic reticulum membrane. The enzyme catalyses 2 (2E,6E)-farnesyl diphosphate + NADH + H(+) = squalene + 2 diphosphate + NAD(+). It carries out the reaction 2 (2E,6E)-farnesyl diphosphate + NADPH + H(+) = squalene + 2 diphosphate + NADP(+). It participates in terpene metabolism; lanosterol biosynthesis; lanosterol from farnesyl diphosphate: step 1/3. In terms of biological role, component of the triterpene saponins (e.g. ginsenosides or panaxosides) and phytosterols biosynthetic pathways. Catalyzes the biosynthesis of squalene. In Panax ginseng (Korean ginseng), this protein is Squalene synthase 10.